Here is a 595-residue protein sequence, read N- to C-terminus: uncharacterized protein (595 aa).

3 disordered regions span residues 50 to 159 (VNPS…KTKK), 398 to 430 (TYPT…PPSL), and 450 to 595 (VTEG…SLDK). Positions 83–122 (SNKSSALKKSNKSSNKSSNKSSNKSSNKSSNKSSNKSSNK) are enriched in low complexity. Residues 123–132 (FPDKSDKSDS) show a composition bias toward basic and acidic residues. The span at 137–146 (DNSDDSDDSS) shows a compositional bias: acidic residues. Residues 398–409 (TYPTTPLFSEPT) show a composition bias toward low complexity. Positions 410 to 420 (IPKPPQQPTTE) are enriched in pro residues. The segment covering 421–430 (PPSGFKPPSL) has biased composition (low complexity). Residues 454 to 463 (KVVESDDHTS) are compositionally biased toward basic and acidic residues. Over residues 467 to 476 (IPPPPPPPPS) the composition is skewed to pro residues. Residues 477–529 (ISSDNSSPNKSVKSSTKSSTKSSTKSSTKSSTKSSTKSPSKTPVKSPIKSSSK) are compositionally biased toward low complexity. Basic and acidic residues predominate over residues 530–542 (LSDKKSPTKKIES). The segment covering 544 to 553 (GESDSESDSE) has biased composition (acidic residues). The segment covering 559–570 (TKKSTNKIKKIT) has biased composition (basic residues). A compositionally biased stretch (low complexity) spans 571–580 (NNKLENSNTK). A compositionally biased stretch (basic residues) spans 581-595 (NNKKFSKKKTISLDK).

This is an uncharacterized protein from Acanthamoeba polyphaga mimivirus (APMV).